Here is a 484-residue protein sequence, read N- to C-terminus: tRNA sulfurtransferase (484 aa).

In terms of domain architecture, THUMP spans Gln63–Arg167. ATP-binding positions include Leu185–Ile186, Lys267, Gly289, and Gln298. A disulfide bond links Cys346 and Cys458. The Rhodanese domain maps to Ile406 to Pro484. Cys458 functions as the Cysteine persulfide intermediate in the catalytic mechanism.

The protein belongs to the ThiI family.

Its subcellular location is the cytoplasm. The catalysed reaction is [ThiI sulfur-carrier protein]-S-sulfanyl-L-cysteine + a uridine in tRNA + 2 reduced [2Fe-2S]-[ferredoxin] + ATP + H(+) = [ThiI sulfur-carrier protein]-L-cysteine + a 4-thiouridine in tRNA + 2 oxidized [2Fe-2S]-[ferredoxin] + AMP + diphosphate. It carries out the reaction [ThiS sulfur-carrier protein]-C-terminal Gly-Gly-AMP + S-sulfanyl-L-cysteinyl-[cysteine desulfurase] + AH2 = [ThiS sulfur-carrier protein]-C-terminal-Gly-aminoethanethioate + L-cysteinyl-[cysteine desulfurase] + A + AMP + 2 H(+). It participates in cofactor biosynthesis; thiamine diphosphate biosynthesis. Its function is as follows. Catalyzes the ATP-dependent transfer of a sulfur to tRNA to produce 4-thiouridine in position 8 of tRNAs, which functions as a near-UV photosensor. Also catalyzes the transfer of sulfur to the sulfur carrier protein ThiS, forming ThiS-thiocarboxylate. This is a step in the synthesis of thiazole, in the thiamine biosynthesis pathway. The sulfur is donated as persulfide by IscS. The polypeptide is tRNA sulfurtransferase (Shewanella sp. (strain MR-4)).